Here is a 258-residue protein sequence, read N- to C-terminus: UPF0246 protein YaaA (258 aa).

Belongs to the UPF0246 family.

The protein is UPF0246 protein YaaA of Escherichia coli (strain SE11).